Here is a 330-residue protein sequence, read N- to C-terminus: MQTLAQHLTSKAVNESLSQLILTLADTSKAISHAVRHGALAGVLGATEQENVQGETQKKLDIITNDMLKDALKADGTVRGLASEEEDHVVEVSANGQYLVCFDPLDGSSNIDINSLVGTIFSVLPAPAGELTETSFLQSGRNQLAAGYVLYGPSTMLALTTGQGVQLFTLHPETNEFLLTNAAMSISPDTQEFAINMSNQRFWEAPMQTYIADLLLGKIGPREKSFNMRWIAAMVGDVHRVLSRGGIFTYPTDNKDPKKPYKLRLMYEANPMALLVEQAGGKASTGYETILDIQPTQIHQRVAVILGSANEVDACLSYHGIDYSEEPTLD.

Mg(2+)-binding residues include Glu-84, Asp-103, Leu-105, and Asp-106. Substrate is bound by residues Asp-106–Ser-109, Asn-196, and Lys-262. Mg(2+) is bound at residue Glu-268.

It belongs to the FBPase class 1 family. As to quaternary structure, homotetramer. The cofactor is Mg(2+).

It is found in the cytoplasm. It carries out the reaction beta-D-fructose 1,6-bisphosphate + H2O = beta-D-fructose 6-phosphate + phosphate. It participates in carbohydrate biosynthesis; gluconeogenesis. The protein is Fructose-1,6-bisphosphatase class 1 of Shewanella sp. (strain MR-7).